A 279-amino-acid polypeptide reads, in one-letter code: Large ribosomal subunit protein uL2 (279 aa).

Disordered stretches follow at residues 1-59 (MGIR…GGHK) and 224-279 (VAMN…KNKR). Positions 50-59 (TTRHKGGGHK) are enriched in basic residues. Residues 253–268 (REGRTRRPNKESDKLI) are compositionally biased toward basic and acidic residues. A compositionally biased stretch (basic residues) spans 269–279 (VRRRRTGKNKR).

It belongs to the universal ribosomal protein uL2 family. Part of the 50S ribosomal subunit. Forms a bridge to the 30S subunit in the 70S ribosome.

Its function is as follows. One of the primary rRNA binding proteins. Required for association of the 30S and 50S subunits to form the 70S ribosome, for tRNA binding and peptide bond formation. It has been suggested to have peptidyltransferase activity; this is somewhat controversial. Makes several contacts with the 16S rRNA in the 70S ribosome. This Pseudarthrobacter chlorophenolicus (strain ATCC 700700 / DSM 12829 / CIP 107037 / JCM 12360 / KCTC 9906 / NCIMB 13794 / A6) (Arthrobacter chlorophenolicus) protein is Large ribosomal subunit protein uL2.